Consider the following 415-residue polypeptide: MSLQAPKGTKDLLPTESYKWQYLENKFRNIAADFGCREIRTPVFEYTELFQRGVGETTDVVQKEMYTFEDKAGRSITLKPEGTSPAVRAFVEGRLFNETQPTKMYYFTPVMRYENVQKGRLRQHHQFGIEIFGAKDASVDAEVISIPVGIYKELGVEGVELNINSIGCPKCRKTYNEALKKYLSKNYDKLCSTCKTRFDKNPLRILDCKVDTCKEIVKDAPIILDYICDECKDHFESLKSYLDVLDIKYKVDPFIVRGLDYYSKTVFEFIIDDITICAGGRYDYLIEEIGGPSMPAVGFGMGIERLLLTLQEKAIEIPEEAYVDLYLGNMGDKAKLEVLKLAKELRDRHIKCEIDHMGKSVKAQMKYANRIGAKYSMVLGEEELNTGKVSLKRMEDGKQIEVDIKEIDTLIKVFK.

Belongs to the class-II aminoacyl-tRNA synthetase family. In terms of assembly, homodimer.

The protein resides in the cytoplasm. It catalyses the reaction tRNA(His) + L-histidine + ATP = L-histidyl-tRNA(His) + AMP + diphosphate + H(+). The polypeptide is Histidine--tRNA ligase (Clostridium botulinum (strain Okra / Type B1)).